The sequence spans 1616 residues: Putative inactive phenolphthiocerol synthesis polyketide synthase type I Pks1 (1616 aa).

Residues 83–397 form an acyltransferase region; sequence TVVVFPGQGA…GQVFTTGVPV (315 aa). Ser-174 functions as the For acyltransferase activity in the catalytic mechanism. Residues 445–567 form an N-terminal hotdog fold region; sequence HALLGAVVER…GMLGVAAAET (123 aa). The interval 445 to 605 is dehydratase; it reads HALLGAVVER…YAYGPAFQGL (161 aa). A PKS/mFAS DH domain is found at 445–719; sequence HALLGAVVER…TRPITAEQLR (275 aa). Residue His-477 is the Proton acceptor; for dehydratase activity of the active site. The segment at 579–719 is C-terminal hotdog fold; it reads AESVDISDGY…TRPITAEQLR (141 aa). Asp-640 serves as the catalytic Proton donor; for dehydratase activity. The enoylreductase stretch occupies residues 910-1215; that stretch reads GTLEDLVIQP…QARHIGKVVL (306 aa). NADP(+)-binding positions include 1040–1057 and 1229–1244; these read VLIHAGTGGVGMAAVQLA and TVVITGATGAVGGVLA. Positions 1228–1409 are beta-ketoacyl reductase; that stretch reads GTVVITGATG…SLAWGLWEQP (182 aa). In terms of domain architecture, Carrier spans 1514-1589; sequence ELLVGLVCLQ…AVAEYVAQQM (76 aa). Ser-1549 is modified (O-(pantetheine 4'-phosphoryl)serine). The segment covering 1588-1604 has biased composition (polar residues); it reads QMSGSRPTESGDPTSQV. Residues 1588-1616 are disordered; the sequence is QMSGSRPTESGDPTSQVVEPAAAEVSVHA.

Pantetheine 4'-phosphate serves as cofactor.

The protein operates within lipid metabolism; fatty acid biosynthesis. In terms of biological role, may play a role in phthiocerol biosynthesis. The sequence is that of Putative inactive phenolphthiocerol synthesis polyketide synthase type I Pks1 (pks1) from Mycobacterium tuberculosis (strain ATCC 25618 / H37Rv).